Consider the following 107-residue polypeptide: uncharacterized protein (107 aa).

An N-terminal signal peptide occupies residues 1 to 20 (MYIKGRLIFFFVVLVIALCS).

This is an uncharacterized protein from Listeria monocytogenes serovar 1/2a (strain ATCC BAA-679 / EGD-e).